Consider the following 490-residue polypeptide: UDP-N-acetylmuramate--L-alanine ligase (490 aa).

ATP is bound at residue 122–128 (GTHGKTS).

It belongs to the MurCDEF family.

The protein resides in the cytoplasm. It catalyses the reaction UDP-N-acetyl-alpha-D-muramate + L-alanine + ATP = UDP-N-acetyl-alpha-D-muramoyl-L-alanine + ADP + phosphate + H(+). The protein operates within cell wall biogenesis; peptidoglycan biosynthesis. Its function is as follows. Cell wall formation. This Mycobacteroides abscessus (strain ATCC 19977 / DSM 44196 / CCUG 20993 / CIP 104536 / JCM 13569 / NCTC 13031 / TMC 1543 / L948) (Mycobacterium abscessus) protein is UDP-N-acetylmuramate--L-alanine ligase.